We begin with the raw amino-acid sequence, 160 residues long: 3-hydroxyacyl-[acyl-carrier-protein] dehydratase FabZ (160 aa).

His-63 is a catalytic residue.

It belongs to the thioester dehydratase family. FabZ subfamily.

Its subcellular location is the cytoplasm. It carries out the reaction a (3R)-hydroxyacyl-[ACP] = a (2E)-enoyl-[ACP] + H2O. Functionally, involved in unsaturated fatty acids biosynthesis. Catalyzes the dehydration of short chain beta-hydroxyacyl-ACPs and long chain saturated and unsaturated beta-hydroxyacyl-ACPs. The chain is 3-hydroxyacyl-[acyl-carrier-protein] dehydratase FabZ from Xylella fastidiosa (strain 9a5c).